We begin with the raw amino-acid sequence, 479 residues long: Trigger factor (479 aa).

The PPIase FKBP-type domain occupies 174–261 (GDIAVVSFSG…LKELKTRELP (88 aa)). A disordered region spans residues 437-479 (KVLESEAKTSKPAAKSKGSKTKSTKTKTNKAKTEKPASDKTKS). Residues 453–466 (KGSKTKSTKTKTNK) are compositionally biased toward basic residues. Residues 467-479 (AKTEKPASDKTKS) are compositionally biased toward basic and acidic residues.

The protein belongs to the FKBP-type PPIase family. Tig subfamily.

It localises to the cytoplasm. It catalyses the reaction [protein]-peptidylproline (omega=180) = [protein]-peptidylproline (omega=0). Functionally, involved in protein export. Acts as a chaperone by maintaining the newly synthesized protein in an open conformation. Functions as a peptidyl-prolyl cis-trans isomerase. This Prochlorococcus marinus (strain MIT 9303) protein is Trigger factor.